Here is a 354-residue protein sequence, read N- to C-terminus: UDP-2,3-diacetamido-2,3-dideoxy-D-glucuronate 2-epimerase (354 aa).

It belongs to the UDP-N-acetylglucosamine 2-epimerase family.

It carries out the reaction UDP-2,3-diacetamido-2,3-dideoxy-alpha-D-glucuronate = UDP-2,3-diacetamido-2,3-dideoxy-alpha-D-mannuronate. The protein operates within bacterial outer membrane biogenesis; LPS O-antigen biosynthesis. Its function is as follows. Plays a role in the biosynthesis of B-band O antigen for serotype O5. Catalyzes the epimerization of UDP-2,3-diacetamido-2,3-dideoxy-alpha-D-glucuronic acid (UDP-alpha-D-GlcNAc3NAcA) to UDP-2,3-diacetamido-2,3-dideoxy-alpha-D-mannuronic acid (UDP-alpha-D-ManNAc3NAcA). Exhibits high specificity towards the substrate as UDP-alpha-D-GlcNAc, UDP-alpha-D-GlcNAcA (UDP-2-acetamido-2-deoxy-alpha-D-glucuronic acid) and UDP-alpha-D-GlcNAc3NAc (UDP-2,3-diacetamido-2,3-dideoxy-alpha-D-glucose) cannot act as substrates. The chain is UDP-2,3-diacetamido-2,3-dideoxy-D-glucuronate 2-epimerase from Pseudomonas aeruginosa (strain ATCC 15692 / DSM 22644 / CIP 104116 / JCM 14847 / LMG 12228 / 1C / PRS 101 / PAO1).